A 159-amino-acid chain; its full sequence is Large ribosomal subunit protein uL11 (159 aa).

The protein belongs to the universal ribosomal protein uL11 family. As to quaternary structure, part of the ribosomal stalk of the 50S ribosomal subunit. Interacts with L10 and the large rRNA to form the base of the stalk. L10 forms an elongated spine to which L12 dimers bind in a sequential fashion forming a multimeric L10(L12)X complex.

Forms part of the ribosomal stalk which helps the ribosome interact with GTP-bound translation factors. The chain is Large ribosomal subunit protein uL11 from Nitrosopumilus maritimus (strain SCM1).